The chain runs to 156 residues: Putative pre-16S rRNA nuclease (156 aa).

Belongs to the YqgF nuclease family.

It localises to the cytoplasm. Functionally, could be a nuclease involved in processing of the 5'-end of pre-16S rRNA. In Nocardioides sp. (strain ATCC BAA-499 / JS614), this protein is Putative pre-16S rRNA nuclease.